We begin with the raw amino-acid sequence, 127 residues long: Histone H2B type 1-A (127 aa).

The segment at 1 to 32 is disordered; it reads MPEVSAKGTTISKKGFKKAVTKTQKKEGRKRK. Proline 2 is subject to N-acetylproline. N6-acetyllysine; alternate occurs at positions 7, 13, 14, 17, 18, 22, and 25. N6-crotonyllysine; alternate is present on residues lysine 7, lysine 13, lysine 14, lysine 17, lysine 18, lysine 22, lysine 25, and lysine 36. An N6-lactoyllysine; alternate mark is found at lysine 7 and lysine 13. Residue lysine 7 forms a Glycyl lysine isopeptide (Lys-Gly) (interchain with G-Cter in SUMO2); alternate linkage. N6-lactoyllysine; alternate is present on residues lysine 17, lysine 18, lysine 22, and lysine 25. Residue lysine 22 forms a Glycyl lysine isopeptide (Lys-Gly) (interchain with G-Cter in SUMO2); alternate linkage. Lysine 36 is subject to N6-succinyllysine; alternate. Lysine 36 participates in a covalent cross-link: Glycyl lysine isopeptide (Lys-Gly) (interchain with G-Cter in ubiquitin); alternate. Residue serine 38 is modified to Phosphoserine. Lysine 45 is modified (N6-lactoyllysine; alternate). Lysine 48 carries the N6-methyllysine modification. At lysine 59 the chain carries N6,N6-dimethyllysine. Arginine 81 carries the dimethylated arginine modification. Lysine 87 carries the post-translational modification N6-acetyllysine; alternate. Position 87 is an N6-lactoyllysine; alternate (lysine 87). Lysine 87 is modified (N6,N6,N6-trimethyllysine; alternate). Arginine 88 and arginine 94 each carry omega-N-methylarginine. Lysine 110 is subject to N6-lactoyllysine; alternate. The residue at position 110 (lysine 110) is an N6-methyllysine. Threonine 117 is subject to Phosphothreonine. 2 positions are modified to N6-lactoyllysine; alternate: lysine 118 and lysine 122. 2 positions are modified to N6-succinyllysine; alternate: lysine 118 and lysine 122. An N6-methylated lysine; alternate modification is found at lysine 118. A Glycyl lysine isopeptide (Lys-Gly) (interchain with G-Cter in ubiquitin); alternate cross-link involves residue lysine 122.

Belongs to the histone H2B family. As to quaternary structure, the nucleosome is a histone octamer containing two molecules each of H2A, H2B, H3 and H4 assembled in one H3-H4 heterotetramer and two H2A-H2B heterodimers. In terms of processing, monoubiquitination at Lys-36 by the MSL1/MSL2 dimer is required for histone H3 'Lys-4' (H3K4me) and 'Lys-79' (H3K79me) methylation and transcription activation at specific gene loci, such as HOXA9 and MEIS1 loci. Similarly, monoubiquitination of Lys-122 (H2BK120Ub) by the RNF20/40 complex gives a specific tag for epigenetic transcriptional activation and is also prerequisite for histone H3 'Lys-4' and 'Lys-79' methylation. It also functions cooperatively with the FACT dimer to stimulate elongation by RNA polymerase II. H2BK120Ub also acts as a regulator of mRNA splicing: deubiquitination by USP49 is required for efficient cotranscriptional splicing of a large set of exons. Post-translationally, crotonylation (Kcr) is specifically present in male germ cells and marks testis-specific genes in post-meiotic cells, including X-linked genes that escape sex chromosome inactivation in haploid cells. Crotonylation marks active promoters and enhancers and confers resistance to transcriptional repressors. It is also associated with post-meiotically activated genes on autosomes. Acetylated during spermatogenesis. Acetylated form is most abundant in spermatogonia compared to spermatocytes and round spermatids. In terms of processing, phosphorylated at Thr-117 in spermatogonia, spermatocytes and round spermatids. Post-translationally, methylated at Lys-118 in spermatogonia, spermatocytes and round spermatids. Lactylated in macrophages by EP300/P300 by using lactoyl-CoA directly derived from endogenous or exogenous lactate, leading to stimulates gene transcription. In terms of tissue distribution, testis. Expressed in pachytene spermatocytes during meiotic prophase I in the absence of any significant DNA synthesis.

The protein resides in the nucleus. The protein localises to the chromosome. Functionally, variant histone specifically required to direct the transformation of dissociating nucleosomes to protamine in male germ cells. Entirely replaces classical histone H2B prior nucleosome to protamine transition and probably acts as a nucleosome dissociating factor that creates a more dynamic chromatin, facilitating the large-scale exchange of histones. Core component of nucleosome. Nucleosomes wrap and compact DNA into chromatin, limiting DNA accessibility to the cellular machineries which require DNA as a template. Histones thereby play a central role in transcription regulation, DNA repair, DNA replication and chromosomal stability. DNA accessibility is regulated via a complex set of post-translational modifications of histones, also called histone code, and nucleosome remodeling. This chain is Histone H2B type 1-A, found in Rattus norvegicus (Rat).